A 739-amino-acid chain; its full sequence is Catalase-peroxidase 2 (739 aa).

Positions 1-26 (MKKSTIPTLSALTLAMSLAFGGSVIA) are cleaved as a signal peptide. The segment at residues 105–227 (WHSAGVYRIF…MGATQMGLIY (123 aa)) is a cross-link (tryptophyl-tyrosyl-methioninium (Trp-Tyr) (with M-253)). Catalysis depends on histidine 106, which acts as the Proton acceptor. Residues 227–253 (YVNPEGPNGVPDPLASAKEIRDTFGRM) constitute a cross-link (tryptophyl-tyrosyl-methioninium (Tyr-Met) (with W-105)). Position 268 (histidine 268) interacts with heme b.

It belongs to the peroxidase family. Peroxidase/catalase subfamily. In terms of assembly, homodimer or homotetramer. Heme b serves as cofactor. Post-translationally, formation of the three residue Trp-Tyr-Met cross-link is important for the catalase, but not the peroxidase activity of the enzyme.

It catalyses the reaction H2O2 + AH2 = A + 2 H2O. The catalysed reaction is 2 H2O2 = O2 + 2 H2O. Its function is as follows. Bifunctional enzyme with both catalase and broad-spectrum peroxidase activity. The protein is Catalase-peroxidase 2 of Shewanella sp. (strain MR-7).